A 390-amino-acid chain; its full sequence is Galactokinase (390 aa).

33–36 (EHTD) provides a ligand contact to substrate. Residues S67 and 124–130 (GAGLSSS) each bind ATP. Mg(2+) contacts are provided by S130 and E162. The active-site Proton acceptor is the D174. Position 224 (Y224) interacts with substrate.

It belongs to the GHMP kinase family. GalK subfamily.

It localises to the cytoplasm. The catalysed reaction is alpha-D-galactose + ATP = alpha-D-galactose 1-phosphate + ADP + H(+). It functions in the pathway carbohydrate metabolism; galactose metabolism. Its function is as follows. Catalyzes the transfer of the gamma-phosphate of ATP to D-galactose to form alpha-D-galactose-1-phosphate (Gal-1-P). In Exiguobacterium sibiricum (strain DSM 17290 / CCUG 55495 / CIP 109462 / JCM 13490 / 255-15), this protein is Galactokinase.